We begin with the raw amino-acid sequence, 285 residues long: tRNA (guanine-N(7)-)-methyltransferase (285 aa).

Residues Gly102, 125-126 (EI), 160-161 (NA), and Cys180 contribute to the S-adenosyl-L-methionine site. Asp183 is an active-site residue. 258 to 260 (TEE) serves as a coordination point for S-adenosyl-L-methionine.

This sequence belongs to the class I-like SAM-binding methyltransferase superfamily. TrmB family. In terms of assembly, forms a complex with TRM82.

The protein resides in the nucleus. It catalyses the reaction guanosine(46) in tRNA + S-adenosyl-L-methionine = N(7)-methylguanosine(46) in tRNA + S-adenosyl-L-homocysteine. It participates in tRNA modification; N(7)-methylguanine-tRNA biosynthesis. Functionally, catalyzes the formation of N(7)-methylguanine at position 46 (m7G46) in tRNA. The sequence is that of tRNA (guanine-N(7)-)-methyltransferase from Candida glabrata (strain ATCC 2001 / BCRC 20586 / JCM 3761 / NBRC 0622 / NRRL Y-65 / CBS 138) (Yeast).